The sequence spans 359 residues: Alanine racemase, biosynthetic (359 aa).

The active-site Proton acceptor; specific for D-alanine is the lysine 34. An N6-(pyridoxal phosphate)lysine modification is found at lysine 34. Arginine 129 provides a ligand contact to substrate. The active-site Proton acceptor; specific for L-alanine is the tyrosine 255. Residue methionine 303 coordinates substrate.

It belongs to the alanine racemase family. Pyridoxal 5'-phosphate serves as cofactor.

The enzyme catalyses L-alanine = D-alanine. Its pathway is amino-acid biosynthesis; D-alanine biosynthesis; D-alanine from L-alanine: step 1/1. It functions in the pathway cell wall biogenesis; peptidoglycan biosynthesis. Functionally, catalyzes the interconversion of L-alanine and D-alanine. Provides the D-alanine required for cell wall biosynthesis. This Escherichia coli O6:H1 (strain CFT073 / ATCC 700928 / UPEC) protein is Alanine racemase, biosynthetic (alr).